A 166-amino-acid chain; its full sequence is Lactose-binding lectin l-2 (166 aa).

The first 24 residues, methionine 1 to glycine 24, serve as a signal peptide directing secretion. Cystine bridges form between cysteine 34/cysteine 45, cysteine 62/cysteine 160, and cysteine 136/cysteine 152. One can recognise a C-type lectin domain in the interval histidine 41–valine 161.

In terms of assembly, homodimer; disulfide-linked. As to expression, skin; contained within club cells which are a component of the epidermis in combination with epithelial cells and mucus cells (at protein level).

The protein resides in the secreted. In terms of biological role, involved in host defense at the body surface. Causes agglutination and suppresses the growth of the Gram-negative bacterium E.coli K12. Possesses calcium-independent hemagglutinating activity. This is Lactose-binding lectin l-2 from Anguilla japonica (Japanese eel).